Reading from the N-terminus, the 185-residue chain is ADP-ribosylation factor (185 aa).

Gly2 is lipidated: N-myristoyl glycine. Residues 27-34, 70-74, and 129-132 each bind GTP; these read GLDAAGKT, DVGGQ, and NKQD.

This sequence belongs to the small GTPase superfamily. Arf family.

The protein resides in the golgi apparatus. Functionally, GTP-binding protein involved in protein trafficking; may modulate vesicle budding and uncoating within the Golgi apparatus. In Neurospora crassa (strain ATCC 24698 / 74-OR23-1A / CBS 708.71 / DSM 1257 / FGSC 987), this protein is ADP-ribosylation factor.